Reading from the N-terminus, the 614-residue chain is Heat shock protein SSB1 (614 aa).

Residues 1–392 form a nucleotide binding domain (NBD) region; that stretch reads MSTEVYDGAI…ILSGKATSAE (392 aa). ATP is bound by residues 16-18, Lys74, 206-208, 272-279, and Gly343; these read TTY, GGT, and ERAKRTLS. The tract at residues 393-403 is inter-domain linker; the sequence is TADLLLLDVVP. Positions 404–614 are substrate binding domain (SBD); the sequence is LSLGVAMEGN…RAVTKAMSSR (211 aa). A lid domain (SBDalpha) region spans residues 517-613; sequence TSEIENMISE…KRAVTKAMSS (97 aa). A Nuclear export signal motif is present at residues 575–583; that stretch reads IENTMSEAM.

It belongs to the heat shock protein 70 family. As to quaternary structure, interacts with HAT1 in starvation conditions.

It localises to the nucleus. Its subcellular location is the cytoplasm. It catalyses the reaction ATP + H2O = ADP + phosphate + H(+). In terms of biological role, chaperone that interacts with the histone acetyltransferase HAT1 and mediates its translocation from the nucleus to the cytoplasm during germination and starvation conditions. Within the cytoplasm, HAT1 regulates autophagy via acetylation of the autophagy-related proteins ATG3 and ATG9. The protein is Heat shock protein SSB1 of Pyricularia oryzae (strain 70-15 / ATCC MYA-4617 / FGSC 8958) (Rice blast fungus).